Consider the following 247-residue polypeptide: Large ribosomal subunit protein uL30 (247 aa).

Met-1 is subject to N-acetylmethionine. Repeat copies occupy residues 7-17 (KKKVPAVPETL), 18-29 (KKKRRNFAELKI), 30-41 (KRLRKKFAQKML), and 42-53 (RKARRKLIYEKA). The tract at residues 7-53 (KKKVPAVPETLKKKRRNFAELKIKRLRKKFAQKMLRKARRKLIYEKA) is 4 X 12 AA tandem repeats. Thr-16 carries the phosphothreonine modification. Lys-123 is subject to N6-acetyllysine. At Lys-126 the chain carries N6-succinyllysine. Tyr-138 is subject to Phosphotyrosine.

This sequence belongs to the universal ribosomal protein uL30 family. Component of the large ribosomal subunit. Homodimer. Interacts with DHX33.

The protein localises to the cytoplasm. In terms of biological role, component of the large ribosomal subunit. The ribosome is a large ribonucleoprotein complex responsible for the synthesis of proteins in the cell. Binds to G-rich structures in 28S rRNA and in mRNAs. Plays a regulatory role in the translation apparatus; inhibits cell-free translation of mRNAs. The protein is Large ribosomal subunit protein uL30 (RPL7) of Macaca fascicularis (Crab-eating macaque).